We begin with the raw amino-acid sequence, 78 residues long: Acyl carrier protein 1 (78 aa).

A Carrier domain is found at 2–77 (STIEERVKKI…EAIDYIVAHQ (76 aa)). Serine 37 carries the O-(pantetheine 4'-phosphoryl)serine modification.

Belongs to the acyl carrier protein (ACP) family. Post-translationally, 4'-phosphopantetheine is transferred from CoA to a specific serine of apo-ACP by AcpS. This modification is essential for activity because fatty acids are bound in thioester linkage to the sulfhydryl of the prosthetic group.

It localises to the cytoplasm. Its pathway is lipid metabolism; fatty acid biosynthesis. Carrier of the growing fatty acid chain in fatty acid biosynthesis. This is Acyl carrier protein 1 from Pseudomonas aeruginosa (strain ATCC 15692 / DSM 22644 / CIP 104116 / JCM 14847 / LMG 12228 / 1C / PRS 101 / PAO1).